The sequence spans 644 residues: Tripeptidyl-peptidase sed1 (644 aa).

An N-terminal signal peptide occupies residues 1–18 (MRLSHVLLGTAAAAGVLA). Positions 19–196 (SPTPNDYVVH…KARSIEKRSF (178 aa)) are cleaved as a propeptide — removed in mature form. The Peptidase S53 domain occupies 224–643 (AITPLCISAL…PALLDLFMSL (420 aa)). The N-linked (GlcNAc...) asparagine glycan is linked to Asn235. Residues Glu300 and Asp304 each act as charge relay system in the active site. 3 N-linked (GlcNAc...) asparagine glycosylation sites follow: Asn326, Asn332, and Asn519. Ser561 functions as the Charge relay system in the catalytic mechanism. The Ca(2+) site is built by Asp602, Ile603, Gly621, and Asp623.

Ca(2+) serves as cofactor. N-glycosylated.

Its subcellular location is the secreted. It is found in the extracellular space. It catalyses the reaction Release of an N-terminal tripeptide from a polypeptide.. Functionally, secreted tripeptidyl-peptidase which degrades proteins at acidic pHs and is involved in virulence. The chain is Tripeptidyl-peptidase sed1 (sed1) from Aspergillus fumigatus (strain ATCC MYA-4609 / CBS 101355 / FGSC A1100 / Af293) (Neosartorya fumigata).